The primary structure comprises 516 residues: Prolyl 4-hydroxylase subunit alpha-1 (516 aa).

An N-linked (GlcNAc...) asparagine glycan is attached at asparagine 97. One copy of the TPR repeat lies at 189-222 (VYILDYLSYAVYQQGDLSKAMMLTKRLLELDPEH). N-linked (GlcNAc...) asparagine glycosylation is present at asparagine 243. A Fe2OG dioxygenase domain is found at 393–501 (TAEELQVANY…KWVSNKWLHE (109 aa)). Positions 411, 413, and 482 each coordinate Fe cation. Position 492 (lysine 492) interacts with 2-oxoglutarate.

Belongs to the P4HA family. Heterotetramer of two alpha chains and two beta chains (the beta chain is the multi-functional PDI). The cofactor is Fe(2+). Requires L-ascorbate as cofactor.

The protein resides in the endoplasmic reticulum lumen. It catalyses the reaction L-prolyl-[collagen] + 2-oxoglutarate + O2 = trans-4-hydroxy-L-prolyl-[collagen] + succinate + CO2. In terms of biological role, catalyzes the post-translational formation of 4-hydroxyproline in -Xaa-Pro-Gly- sequences in collagens and other proteins. The polypeptide is Prolyl 4-hydroxylase subunit alpha-1 (P4HA1) (Gallus gallus (Chicken)).